Here is a 1028-residue protein sequence, read N- to C-terminus: Contactin-6 (1028 aa).

The N-terminal stretch at 1-19 (MRLLWKLVILLPLINSCAG) is a signal peptide. Ig-like C2-type domains lie at 32-117 (PQDV…AKLQ), 122-208 (EDFE…RSVQ), 227-308 (PKIE…RNLA), 318-402 (PEWE…AELR), 408-502 (PDFS…RTII), and 500-587 (TIIT…ERLS). 6 cysteine pairs are disulfide-bonded: C50–C100, C144–C196, C249–C297, C339–C386, C431–C479, and C521–C577. N-linked (GlcNAc...) asparagine glycans are attached at residues N65 and N193. N-linked (GlcNAc...) asparagine glycosylation is found at N368, N377, and N468. 4 Fibronectin type-III domains span residues 600 to 698 (PPED…TKAS), 703 to 800 (APGN…SGED), 805 to 901 (APRG…TKKS), and 902 to 996 (PPSQ…KMSS). 4 N-linked (GlcNAc...) asparagine glycosylation sites follow: N659, N765, N860, and N865. Y882 bears the Phosphotyrosine mark. N-linked (GlcNAc...) asparagine glycans are attached at residues N895, N931, N956, and N957. S999 carries the GPI-anchor amidated serine lipid modification. A propeptide spans 1000-1028 (TGVQISKPSTQSLSMVGVFYCFAIHPLSR) (removed in mature form).

Belongs to the immunoglobulin superfamily. Contactin family. In terms of assembly, interacts with PTPRG. As to expression, expressed in brain. In brain, it is preferentially expressed in the accessory olfactory bulb, layers II/III and V of the cerebral cortex, piriform cortex, anterior thalamic nuclei, locus coeruleus of the pons and mesencephalic trigeminal nucleus and in Purkinje cells of the cerebellum.

Its subcellular location is the cell membrane. Contactins mediate cell surface interactions during nervous system development. Participates in oligodendrocytes generation by acting as a ligand of NOTCH1. Its association with NOTCH1 promotes NOTCH1 activation through the released notch intracellular domain (NICD) and subsequent translocation to the nucleus. Involved in motor coordination. This is Contactin-6 (Cntn6) from Mus musculus (Mouse).